Consider the following 215-residue polypeptide: Abscisic acid receptor PYL6 (215 aa).

Residues 54-209 (HVVGPSQCFS…NLQSLAKLAE (156 aa)) form an START-like region. Cys61 and Cys190 are disulfide-bonded. Residues Lys90, 120 to 125 (AAFSLE), 147 to 153 (RLMNYKS), and Glu174 each bind abscisate. Positions 116 to 120 (SGLPA) match the Gate loop motif. Residues 146-148 (HRL) carry the Latch loop motif.

The protein belongs to the PYR/PYL/RCAR abscisic acid intracellular receptor family. In terms of assembly, monomer. Homodimer. Binds ABA on one subunit only. Interacts with HAB1, ABI1 and ABI2, and possibly with other PP2Cs. Binds to CARs protein in an ABA-independent manner, both at the plasma membrane and in the nucleus. Interacts directly with CAR1 and CAR4. Interacts with MYC2 in the nucleus. Interaction with MYC2 is increased in the presence of abscisic acid.

Its subcellular location is the cytoplasm. It is found in the nucleus. It localises to the cell membrane. Functionally, receptor for abscisic acid (ABA) required for ABA-mediated responses such as stomatal closure and germination inhibition. Inhibits the activity of group-A protein phosphatases type 2C (PP2Cs) in an ABA-independent manner but more efficiently when activated by ABA. Can be activated by both (-)-ABA and (+)-ABA. May link ABA and jasmonate signaling pathways by modifying MYC2 transcriptional activity, and regulation of JAZ6 and JAZ8 gene expression by MYC2. This Arabidopsis thaliana (Mouse-ear cress) protein is Abscisic acid receptor PYL6 (PYL6).